The sequence spans 136 residues: Small ribosomal subunit protein bS16 (136 aa).

Residues 113–122 are compositionally biased toward basic residues; sequence LALKSHRRSA. The segment at 113-136 is disordered; sequence LALKSHRRSAKKEAEAKAATGGEA.

Belongs to the bacterial ribosomal protein bS16 family.

In Pelodictyon phaeoclathratiforme (strain DSM 5477 / BU-1), this protein is Small ribosomal subunit protein bS16.